A 184-amino-acid chain; its full sequence is Ribosome-recycling factor (184 aa).

This sequence belongs to the RRF family.

It localises to the cytoplasm. In terms of biological role, responsible for the release of ribosomes from messenger RNA at the termination of protein biosynthesis. May increase the efficiency of translation by recycling ribosomes from one round of translation to another. The protein is Ribosome-recycling factor of Natranaerobius thermophilus (strain ATCC BAA-1301 / DSM 18059 / JW/NM-WN-LF).